Reading from the N-terminus, the 463-residue chain is Interstitial collagenase B (463 aa).

Positions 1-17 (MPSLPLLLRLWAASSYS) are cleaved as a signal peptide. A propeptide spans 18–96 (FPVIQDGLQK…PRCGVPDVAP (79 aa)) (activation peptide). The Cysteine switch signature appears at 87-94 (PRCGVPDV). Residue C89 coordinates Zn(2+). The metalloprotease stretch occupies residues 95–273 (APYAITHNNP…PIQLTDATLD (179 aa)). D155 is a binding site for Ca(2+). Positions 165 and 167 each coordinate Zn(2+). 2 residues coordinate Ca(2+): D172 and G173. H180 lines the Zn(2+) pocket. Residues G187 and G189 each coordinate Ca(2+). Residue H193 participates in Zn(2+) binding. Residue D195 participates in Ca(2+) binding. Position 215 (H215) interacts with Zn(2+). Residue E216 is part of the active site. Residues H219 and H225 each coordinate Zn(2+). A disulfide bridge connects residues C275 and C463. Hemopexin repeat units follow at residues 278–321 (GLTF…WPNL) and 322–368 (PGKF…FGFP). D282 contacts Ca(2+). N-linked (GlcNAc...) asparagine glycosylation occurs at N370. 2 Hemopexin repeats span residues 371-419 (VTNI…FPGI) and 420-463 (DYKV…WFNC). 2 residues coordinate Ca(2+): D375 and D424.

It belongs to the peptidase M10A family. Ca(2+) serves as cofactor. It depends on Zn(2+) as a cofactor.

It localises to the secreted. The protein localises to the extracellular space. Its subcellular location is the extracellular matrix. It catalyses the reaction Cleavage of the triple helix of collagen at about three-quarters of the length of the molecule from the N-terminus, at 775-Gly-|-Ile-776 in the alpha1(I) chain. Cleaves synthetic substrates and alpha-macroglobulins at bonds where P1' is a hydrophobic residue.. With respect to regulation, can be activated without removal of the activation peptide. The chain is Interstitial collagenase B (Mmp1b) from Mus musculus (Mouse).